The primary structure comprises 228 residues: Phosphoglycolate phosphatase (228 aa).

Asp-9 functions as the Nucleophile in the catalytic mechanism. Mg(2+) is bound by residues Asp-9 and Asp-11. Substrate is bound at residue Lys-151. Residues Asp-174 and Asp-178 each coordinate Mg(2+).

The protein belongs to the archaeal SPP-like hydrolase family. Mg(2+) is required as a cofactor.

It carries out the reaction 2-phosphoglycolate + H2O = glycolate + phosphate. Functionally, catalyzes the dephosphorylation of 2-phosphoglycolate. The chain is Phosphoglycolate phosphatase from Pyrobaculum islandicum (strain DSM 4184 / JCM 9189 / GEO3).